The chain runs to 177 residues: Ribosome rescue factor SmrB (177 aa).

The 76-residue stretch at Leu-92 to Glu-167 folds into the Smr domain.

This sequence belongs to the SmrB family. As to quaternary structure, associates with collided ribosomes, but not with correctly translating polysomes.

Acts as a ribosome collision sensor. Detects stalled/collided disomes (pairs of ribosomes where the leading ribosome is stalled and a second ribosome has collided with it) and endonucleolytically cleaves mRNA at the 5' boundary of the stalled ribosome. Stalled/collided disomes form a new interface (primarily via the 30S subunits) that binds SmrB. Cleaved mRNA becomes available for tmRNA ligation, leading to ribosomal subunit dissociation and rescue of stalled ribosomes. This chain is Ribosome rescue factor SmrB, found in Haemophilus ducreyi (strain 35000HP / ATCC 700724).